The chain runs to 475 residues: 3-isopropylmalate dehydratase large subunit (475 aa).

[4Fe-4S] cluster contacts are provided by cysteine 353, cysteine 414, and cysteine 417.

The protein belongs to the aconitase/IPM isomerase family. LeuC type 1 subfamily. Heterodimer of LeuC and LeuD. [4Fe-4S] cluster serves as cofactor.

The catalysed reaction is (2R,3S)-3-isopropylmalate = (2S)-2-isopropylmalate. It functions in the pathway amino-acid biosynthesis; L-leucine biosynthesis; L-leucine from 3-methyl-2-oxobutanoate: step 2/4. Functionally, catalyzes the isomerization between 2-isopropylmalate and 3-isopropylmalate, via the formation of 2-isopropylmaleate. This chain is 3-isopropylmalate dehydratase large subunit, found in Marinomonas sp. (strain MWYL1).